Consider the following 649-residue polypeptide: Acid beta-fructofuranosidase (649 aa).

Residues 1–22 (MEHHKPLLPTSSHAAPTSSTRK) lie on the Cytoplasmic side of the membrane. Residues 1 to 101 (MEHHKPLLPT…NLLFAGEGGA (101 aa)) constitute a propeptide, removed in mature form. A helical; Signal-anchor for type II membrane protein transmembrane segment spans residues 23–43 (DLLFVLCGLLFLSSLVAYGGY). The Lumenal segment spans residues 44-649 (RASGVPHAHL…PFPFNPDQKS (606 aa)). Residues 52 to 75 (HLSSPTSNHQQDHQSPTSLPSSKW) form a disordered region. Over residues 54-72 (SSPTSNHQQDHQSPTSLPS) the composition is skewed to polar residues. Substrate contacts are provided by residues 127 to 130 (WMND), Gln-146, Trp-154, and 189 to 190 (WT). Residue Asp-130 is part of the active site. Residue Asn-210 is glycosylated (N-linked (GlcNAc...) (complex) asparagine). 253-254 (RD) is a binding site for substrate. Residue Asn-275 is glycosylated (N-linked (GlcNAc...) (complex) asparagine). 2 residues coordinate substrate: Glu-308 and Asp-341. An intrachain disulfide couples Cys-498 to Cys-546. N-linked (GlcNAc...) (high mannose) asparagine glycosylation occurs at Asn-618.

It belongs to the glycosyl hydrolase 32 family. Present in two forms, a 70 kDa monomer and a heterodimer of the 30 kDa and 38 kDa subunits. The ratio of the levels of the two forms within cells appears to be regulated developmentally.

It localises to the membrane. The protein resides in the vacuole lumen. The enzyme catalyses Hydrolysis of terminal non-reducing beta-D-fructofuranoside residues in beta-D-fructofuranosides.. It functions in the pathway glycan biosynthesis; sucrose metabolism. Functionally, possible role in the continued mobilization of sucrose to sink organs. This Vigna radiata var. radiata (Mung bean) protein is Acid beta-fructofuranosidase (INVA).